Reading from the N-terminus, the 477-residue chain is Aspartyl/glutamyl-tRNA(Asn/Gln) amidotransferase subunit B (477 aa).

It belongs to the GatB/GatE family. GatB subfamily. In terms of assembly, heterotrimer of A, B and C subunits.

It carries out the reaction L-glutamyl-tRNA(Gln) + L-glutamine + ATP + H2O = L-glutaminyl-tRNA(Gln) + L-glutamate + ADP + phosphate + H(+). The enzyme catalyses L-aspartyl-tRNA(Asn) + L-glutamine + ATP + H2O = L-asparaginyl-tRNA(Asn) + L-glutamate + ADP + phosphate + 2 H(+). Allows the formation of correctly charged Asn-tRNA(Asn) or Gln-tRNA(Gln) through the transamidation of misacylated Asp-tRNA(Asn) or Glu-tRNA(Gln) in organisms which lack either or both of asparaginyl-tRNA or glutaminyl-tRNA synthetases. The reaction takes place in the presence of glutamine and ATP through an activated phospho-Asp-tRNA(Asn) or phospho-Glu-tRNA(Gln). This is Aspartyl/glutamyl-tRNA(Asn/Gln) amidotransferase subunit B from Bdellovibrio bacteriovorus (strain ATCC 15356 / DSM 50701 / NCIMB 9529 / HD100).